Consider the following 504-residue polypeptide: Probable protein phosphatase 2C 18 (504 aa).

The tract at residues 1-49 (MGLCYSVDRTTGKEPGEASSTATTAETVEERSGSGRWRRPRDLKGGGDI) is disordered. Positions 17 to 26 (EASSTATTAE) are enriched in low complexity. A PPM-type phosphatase domain is found at 67 to 399 (IACLYTQQGK…DDCTVVCLFL (333 aa)). The Mn(2+) site is built by aspartate 103, glycine 104, aspartate 344, and aspartate 390. The tract at residues 410-435 (TNVKKDSPKEESIESVTNSTSKEEDE) is disordered. A compositionally biased stretch (basic and acidic residues) spans 412–421 (VKKDSPKEES).

This sequence belongs to the PP2C family. The cofactor is Mg(2+). Requires Mn(2+) as cofactor.

The catalysed reaction is O-phospho-L-seryl-[protein] + H2O = L-seryl-[protein] + phosphate. It catalyses the reaction O-phospho-L-threonyl-[protein] + H2O = L-threonyl-[protein] + phosphate. The protein is Probable protein phosphatase 2C 18 of Arabidopsis thaliana (Mouse-ear cress).